The primary structure comprises 392 residues: Nicotinate phosphoribosyltransferase (392 aa).

At His214 the chain carries Phosphohistidine; by autocatalysis.

It belongs to the NAPRTase family. Post-translationally, transiently phosphorylated on a His residue during the reaction cycle. Phosphorylation strongly increases the affinity for substrates and increases the rate of nicotinate D-ribonucleotide production. Dephosphorylation regenerates the low-affinity form of the enzyme, leading to product release.

The catalysed reaction is nicotinate + 5-phospho-alpha-D-ribose 1-diphosphate + ATP + H2O = nicotinate beta-D-ribonucleotide + ADP + phosphate + diphosphate. Its pathway is cofactor biosynthesis; NAD(+) biosynthesis; nicotinate D-ribonucleotide from nicotinate: step 1/1. In terms of biological role, catalyzes the synthesis of beta-nicotinate D-ribonucleotide from nicotinate and 5-phospho-D-ribose 1-phosphate at the expense of ATP. The chain is Nicotinate phosphoribosyltransferase from Xanthomonas axonopodis pv. citri (strain 306).